The sequence spans 497 residues: Signal recognition particle subunit SRP54 1 (497 aa).

Positions 1 to 295 (MVLAQLGGSI…DVKPFVSRLL (295 aa)) are G-domain. Residues 108 to 115 (GLQGSGKT), 190 to 194 (DTSGR), and 248 to 251 (TKLD) contribute to the GTP site. Residues 296–497 (GMGDLSGLMD…MLGGMGLGGD (202 aa)) are M-domain.

This sequence belongs to the GTP-binding SRP family. SRP54 subfamily. In terms of assembly, component of a signal recognition particle (SRP) complex that consists of a 7SL RNA molecule of 300 nucleotides and six protein subunits: SRP72, SRP68, SRP54, SRP19, SRP14 and SRP9.

The protein localises to the cytoplasm. The protein resides in the endoplasmic reticulum. The enzyme catalyses GTP + H2O = GDP + phosphate + H(+). Component of the signal recognition particle (SRP) complex, a ribonucleoprotein complex that mediates the cotranslational targeting of secretory and membrane proteins to the endoplasmic reticulum (ER). As part of the SRP complex, associates with the SRP receptor (SR) component SRPRA to target secretory proteins to the endoplasmic reticulum membrane. Binds to the signal sequence of presecretory proteins when they emerge from the ribosomes. Displays basal GTPase activity, and stimulates reciprocal GTPase activation of the SR subunit SRPRA. Forms a guanosine 5'-triphosphate (GTP)-dependent complex with the SR subunit SRPRA. SR compaction and GTPase mediated rearrangement of SR drive SRP-mediated cotranslational protein translocation into the ER. Requires the presence of SRP9/SRP14 and/or SRP19 to stably interact with RNA. This chain is Signal recognition particle subunit SRP54 1 (SRP54-1), found in Hordeum vulgare (Barley).